The sequence spans 296 residues: 4-hydroxy-tetrahydrodipicolinate synthase (296 aa).

Pyruvate is bound at residue T50. The active-site Proton donor/acceptor is Y138. Residue K166 is the Schiff-base intermediate with substrate of the active site. I208 provides a ligand contact to pyruvate.

It belongs to the DapA family. Homotetramer; dimer of dimers.

It localises to the cytoplasm. The catalysed reaction is L-aspartate 4-semialdehyde + pyruvate = (2S,4S)-4-hydroxy-2,3,4,5-tetrahydrodipicolinate + H2O + H(+). Its pathway is amino-acid biosynthesis; L-lysine biosynthesis via DAP pathway; (S)-tetrahydrodipicolinate from L-aspartate: step 3/4. Functionally, catalyzes the condensation of (S)-aspartate-beta-semialdehyde [(S)-ASA] and pyruvate to 4-hydroxy-tetrahydrodipicolinate (HTPA). This Thiobacillus denitrificans (strain ATCC 25259 / T1) protein is 4-hydroxy-tetrahydrodipicolinate synthase.